The following is a 379-amino-acid chain: MLPQNSQVVHGVQDGPPVGPQPAQALLKVPVDVRRQAQAGPLAGVEPRPRLGVGAHHTPGVPVPLILGAVQHVHLLPGPRGQCLGHPLDVVHPLAQHQPLYVGPEEHPVGQGGVPLGVIGLGLDHRVPVHLARDLAKLGLYVHARAEYLHLVGPGVDPVHRAVLPAEKGPQCSVVVVVPHGCSAQTQQVRGPHRQEDPTRHGGRQLVGLIHNQEKFCGRVLGLDPPVSQRSRTRHIQVPGQGVGRRGAGCKDPRVRKEPGRRVPPLSRQHPPVCQDEGGQPQPPPQLQGHEGLAEAGRALEHAVPLGGDVAPGLLQDPFLVRSERDGAPLPGCAVSGRRFASQDPGTPGEGDVGLSPGREGKQVRFPRAGHVSIYRVEP.

Disordered stretches follow at residues 1–20, 227–290, and 331–371; these read MLPQ…PVGP, VSQR…LQGH, and PGCA…RAGH. The segment covering 7–20 has biased composition (low complexity); sequence QVVHGVQDGPPVGP. Residues 249 to 261 show a composition bias toward basic and acidic residues; sequence GCKDPRVRKEPGR.

This is an uncharacterized protein from Dryophytes versicolor (chameleon treefrog).